The sequence spans 557 residues: Aerobic glycerol-3-phosphate dehydrogenase (557 aa).

21-49 (DVVIVGGGITGAGIALDASNRGMKVALVE) provides a ligand contact to FAD.

It belongs to the FAD-dependent glycerol-3-phosphate dehydrogenase family. FAD serves as cofactor.

The protein resides in the cytoplasm. The enzyme catalyses a quinone + sn-glycerol 3-phosphate = dihydroxyacetone phosphate + a quinol. Its pathway is polyol metabolism; glycerol degradation via glycerol kinase pathway; glycerone phosphate from sn-glycerol 3-phosphate (aerobic route): step 1/1. This Staphylococcus epidermidis (strain ATCC 35984 / DSM 28319 / BCRC 17069 / CCUG 31568 / BM 3577 / RP62A) protein is Aerobic glycerol-3-phosphate dehydrogenase (glpD).